Consider the following 361-residue polypeptide: dTDP-glucose 4,6-dehydratase (361 aa).

Residues 11–12 (FI), 32–35 (DKLT), 58–59 (DI), 80–84 (LAAES), and T99 each bind NAD(+). S84 is a substrate binding site. T133 serves as a coordination point for substrate. D134 (proton donor) is an active-site residue. Active-site proton acceptor residues include E135 and Y167. 167–171 (YSASK) lines the NAD(+) pocket. Position 196 (N196) interacts with substrate. N197 serves as a coordination point for NAD(+). Substrate is bound by residues 206-207 (KL), 222-224 (PIY), R231, N266, and 296-300 (DRPGH).

This sequence belongs to the NAD(P)-dependent epimerase/dehydratase family. dTDP-glucose dehydratase subfamily. Homodimer. NAD(+) is required as a cofactor.

The catalysed reaction is dTDP-alpha-D-glucose = dTDP-4-dehydro-6-deoxy-alpha-D-glucose + H2O. It participates in carbohydrate biosynthesis; dTDP-L-rhamnose biosynthesis. Its pathway is bacterial outer membrane biogenesis; LPS O-antigen biosynthesis. Catalyzes the dehydration of dTDP-D-glucose to form dTDP-6-deoxy-D-xylo-4-hexulose via a three-step process involving oxidation, dehydration and reduction. This chain is dTDP-glucose 4,6-dehydratase (rfbB), found in Shigella flexneri.